A 320-amino-acid chain; its full sequence is Biotin synthase (320 aa).

A Radical SAM core domain is found at 39 to 267 (NAIQLATLLS…KARVRLSAGR (229 aa)). Positions 54, 58, and 61 each coordinate [4Fe-4S] cluster. Positions 98, 130, 190, and 262 each coordinate [2Fe-2S] cluster.

Belongs to the radical SAM superfamily. Biotin synthase family. As to quaternary structure, homodimer. It depends on [4Fe-4S] cluster as a cofactor. The cofactor is [2Fe-2S] cluster.

It carries out the reaction (4R,5S)-dethiobiotin + (sulfur carrier)-SH + 2 reduced [2Fe-2S]-[ferredoxin] + 2 S-adenosyl-L-methionine = (sulfur carrier)-H + biotin + 2 5'-deoxyadenosine + 2 L-methionine + 2 oxidized [2Fe-2S]-[ferredoxin]. It participates in cofactor biosynthesis; biotin biosynthesis; biotin from 7,8-diaminononanoate: step 2/2. Catalyzes the conversion of dethiobiotin (DTB) to biotin by the insertion of a sulfur atom into dethiobiotin via a radical-based mechanism. The chain is Biotin synthase from Synechococcus elongatus (strain ATCC 33912 / PCC 7942 / FACHB-805) (Anacystis nidulans R2).